A 356-amino-acid polypeptide reads, in one-letter code: Tyrosine recombinase XerS (356 aa).

Residues 16-121 (LMPWYVLEYY…ALSSLYKYLT (106 aa)) enclose the Core-binding (CB) domain. Residues 169–354 (GFLTYIDQEH…VSDEQKNALD (186 aa)) enclose the Tyr recombinase domain. Active-site residues include R210, K234, H306, R309, and H332. The active-site O-(3'-phospho-DNA)-tyrosine intermediate is the Y341.

This sequence belongs to the 'phage' integrase family. XerS subfamily.

It localises to the cytoplasm. With respect to regulation, ftsK is required for recombination. Its function is as follows. Site-specific tyrosine recombinase, which acts by catalyzing the cutting and rejoining of the recombining DNA molecules. Essential to convert dimers of the bacterial chromosome into monomers to permit their segregation at cell division. This is Tyrosine recombinase XerS from Streptococcus pneumoniae (strain 70585).